Consider the following 303-residue polypeptide: Mycothiol acetyltransferase (303 aa).

N-acetyltransferase domains lie at 1-150 (MALL…RPLD) and 162-303 (VTIR…QFGR). Glu-18 contributes to the 1D-myo-inositol 2-(L-cysteinylamino)-2-deoxy-alpha-D-glucopyranoside binding site. 77 to 79 (LAV) provides a ligand contact to acetyl-CoA. 1D-myo-inositol 2-(L-cysteinylamino)-2-deoxy-alpha-D-glucopyranoside is bound by residues Glu-189, Lys-229, and Glu-237. Acetyl-CoA contacts are provided by residues 241–243 (VGV) and 248–254 (QGNGLGR). 1D-myo-inositol 2-(L-cysteinylamino)-2-deoxy-alpha-D-glucopyranoside is bound at residue Tyr-275. Residue 280–285 (NTAAIK) participates in acetyl-CoA binding.

This sequence belongs to the acetyltransferase family. MshD subfamily. As to quaternary structure, monomer.

The enzyme catalyses 1D-myo-inositol 2-(L-cysteinylamino)-2-deoxy-alpha-D-glucopyranoside + acetyl-CoA = mycothiol + CoA + H(+). Catalyzes the transfer of acetyl from acetyl-CoA to desacetylmycothiol (Cys-GlcN-Ins) to form mycothiol. This is Mycothiol acetyltransferase from Saccharopolyspora erythraea (strain ATCC 11635 / DSM 40517 / JCM 4748 / NBRC 13426 / NCIMB 8594 / NRRL 2338).